The primary structure comprises 382 residues: Palmitoyltransferase ZDHHC16B (382 aa).

Over 1 to 75 the chain is Cytoplasmic; that stretch reads MRSWRWSVSR…IYWLVDNMTR (75 aa). A helical transmembrane segment spans residues 76–96; it reads WFGVVFVCLVMALTSSVVVIV. Over 97 to 107 the chain is Lumenal; the sequence is YLCVLPIIFSS. A helical membrane pass occupies residues 108–130; that stretch reads YPVYWILWHLCYGHWNLLMVVFH. The Cytoplasmic segment spans residues 131-196; the sequence is YYKATTTQPG…NNCVGHFNHR (66 aa). Residues 153–203 enclose the DHHC domain; the sequence is TICKKCIVPKPARTHHCSICNRCILKMDHHCPWLNNCVGHFNHRYFFSFCL. The S-palmitoyl cysteine intermediate role is filled by Cys-183. A helical transmembrane segment spans residues 197 to 217; the sequence is YFFSFCLFMTMGCVYCSISAK. Residues 218 to 275 lie on the Lumenal side of the membrane; sequence DMFLDAYNAIESGRYKGGASQGEAVPGAGLIYISFQHQSSYQTPPPAFTHQERMVHKS. Residues 276-296 traverse the membrane as a helical segment; sequence LVYLWVLTSSVAVALGALTLW. Topologically, residues 297–382 are cytoplasmic; the sequence is HAILITRGET…PAYKSSTTAI (86 aa).

This sequence belongs to the DHHC palmitoyltransferase family.

It localises to the endoplasmic reticulum membrane. It carries out the reaction L-cysteinyl-[protein] + hexadecanoyl-CoA = S-hexadecanoyl-L-cysteinyl-[protein] + CoA. Functionally, palmitoyl acyltransferase that mediates palmitoylation of proteins and is required during embryonic heart development. Involved in the proliferation of neural stem cells by regulating the FGF/ERK pathway. In Danio rerio (Zebrafish), this protein is Palmitoyltransferase ZDHHC16B.